We begin with the raw amino-acid sequence, 509 residues long: Glycogen synthase 2 (509 aa).

Lysine 15 is an ADP-alpha-D-glucose binding site.

This sequence belongs to the glycosyltransferase 1 family. Bacterial/plant glycogen synthase subfamily.

The catalysed reaction is [(1-&gt;4)-alpha-D-glucosyl](n) + ADP-alpha-D-glucose = [(1-&gt;4)-alpha-D-glucosyl](n+1) + ADP + H(+). It participates in glycan biosynthesis; glycogen biosynthesis. Synthesizes alpha-1,4-glucan chains using ADP-glucose. The polypeptide is Glycogen synthase 2 (glgA2) (Agrobacterium fabrum (strain C58 / ATCC 33970) (Agrobacterium tumefaciens (strain C58))).